A 496-amino-acid chain; its full sequence is Fatty acyl-CoA reductase 8 (496 aa).

Belongs to the fatty acyl-CoA reductase family.

The catalysed reaction is a long-chain fatty acyl-CoA + 2 NADPH + 2 H(+) = a long-chain primary fatty alcohol + 2 NADP(+) + CoA. Functionally, catalyzes the reduction of fatty acyl-CoA to fatty alcohols. Catalyzes specifically the formation of C16:0 fatty alcohol. This Arabidopsis thaliana (Mouse-ear cress) protein is Fatty acyl-CoA reductase 8 (FAR8).